The sequence spans 238 residues: LexA repressor (238 aa).

The segment at residues 26–46 (FDEMKDALDLRSKSGIHRLIT) is a DNA-binding region (H-T-H motif). Catalysis depends on for autocatalytic cleavage activity residues S159 and K197.

The protein belongs to the peptidase S24 family. Homodimer.

It catalyses the reaction Hydrolysis of Ala-|-Gly bond in repressor LexA.. Represses a number of genes involved in the response to DNA damage (SOS response), including recA and lexA. In the presence of single-stranded DNA, RecA interacts with LexA causing an autocatalytic cleavage which disrupts the DNA-binding part of LexA, leading to derepression of the SOS regulon and eventually DNA repair. In Rhodobacter capsulatus (Rhodopseudomonas capsulata), this protein is LexA repressor.